Reading from the N-terminus, the 245-residue chain is tRNA1(Val) (adenine(37)-N6)-methyltransferase (245 aa).

Belongs to the methyltransferase superfamily. tRNA (adenine-N(6)-)-methyltransferase family.

The protein resides in the cytoplasm. It catalyses the reaction adenosine(37) in tRNA1(Val) + S-adenosyl-L-methionine = N(6)-methyladenosine(37) in tRNA1(Val) + S-adenosyl-L-homocysteine + H(+). Functionally, specifically methylates the adenine in position 37 of tRNA(1)(Val) (anticodon cmo5UAC). This Klebsiella pneumoniae subsp. pneumoniae (strain ATCC 700721 / MGH 78578) protein is tRNA1(Val) (adenine(37)-N6)-methyltransferase.